We begin with the raw amino-acid sequence, 299 residues long: HTH-type transcriptional regulator CynR (299 aa).

In terms of domain architecture, HTH lysR-type spans Met-1 to Thr-58. Positions Phe-18–Arg-37 form a DNA-binding region, H-T-H motif.

The protein belongs to the LysR transcriptional regulatory family.

The protein localises to the cytoplasm. Positively regulates the cynTSX operon, and negatively regulates its own transcription. Binds specifically to the cynR-cynTSX intergenic region. The sequence is that of HTH-type transcriptional regulator CynR (cynR) from Escherichia coli (strain K12).